The following is a 363-amino-acid chain: NADH-quinone oxidoreductase subunit H (363 aa).

The next 10 helical transmembrane spans lie at 29–49 (VLKI…YVVW), 62–82 (GPMY…KLLF), 96–116 (FVIA…VVPF), 127–147 (VGLL…ILAG), 163–183 (AAQV…VMIA), 202–222 (FFDW…VSGV), 238–257 (EIVA…LFFL), 264–286 (ILVS…QGWV), 299–319 (KGGW…YIWF), and 339–359 (FIPL…YGVI).

It belongs to the complex I subunit 1 family. NDH-1 is composed of 14 different subunits. Subunits NuoA, H, J, K, L, M, N constitute the membrane sector of the complex.

Its subcellular location is the cell inner membrane. The catalysed reaction is a quinone + NADH + 5 H(+)(in) = a quinol + NAD(+) + 4 H(+)(out). Functionally, NDH-1 shuttles electrons from NADH, via FMN and iron-sulfur (Fe-S) centers, to quinones in the respiratory chain. The immediate electron acceptor for the enzyme in this species is believed to be ubiquinone. Couples the redox reaction to proton translocation (for every two electrons transferred, four hydrogen ions are translocated across the cytoplasmic membrane), and thus conserves the redox energy in a proton gradient. This subunit may bind ubiquinone. The protein is NADH-quinone oxidoreductase subunit H of Xanthomonas euvesicatoria pv. vesicatoria (strain 85-10) (Xanthomonas campestris pv. vesicatoria).